The primary structure comprises 187 residues: NADH-dependent FMN reductase SfnF (187 aa).

The protein belongs to the SsuE family.

It catalyses the reaction FMNH2 + NAD(+) = FMN + NADH + 2 H(+). Involved in the dimethyl sulfide degradation pathway. Catalyzes the NADH-dependent reduction of FMN. The polypeptide is NADH-dependent FMN reductase SfnF (Pseudomonas fluorescens (strain Pf0-1)).